Consider the following 125-residue polypeptide: Protein MGF 110-4L (125 aa).

The first 29 residues, 1–29, serve as a signal peptide directing secretion; sequence MLVVFFLGILGLLANQILGLPTQAGGHLR. An N-linked (GlcNAc...) asparagine; by host glycan is attached at asparagine 65. The short motif at 122 to 125 is the Prevents secretion from ER element; that stretch reads KEDL.

This sequence belongs to the asfivirus MGF 110 family.

The protein resides in the virion. It is found in the host endoplasmic reticulum-Golgi intermediate compartment. Its function is as follows. Causes the redistribution of lumenal ER protein to an enlarged ERGIC compartment. This is Protein MGF 110-4L from Ornithodoros (relapsing fever ticks).